The following is a 3084-amino-acid chain: Highly reducing polyketide synthase sdnO (3084 aa).

Residues 4 to 430 (PIPLAVVGIA…GTNAHAVLEK (427 aa)) enclose the Ketosynthase family 3 (KS3) domain. Residues Cys-178, His-313, and His-353 each act as for beta-ketoacyl synthase activity in the active site. The interval 541–841 (FIFTGQGAQW…LAGPLRQSVA (301 aa)) is malonyl-CoA:ACP transacylase (MAT) domain. Ser-632 serves as the catalytic For malonyltransferase activity. The tract at residues 931-1071 (HDLLGLRMTD…GSVLIDLVSS (141 aa)) is N-terminal hotdog fold. Residues 931-1243 (HDLLGLRMTD…RSAEADMLVF (313 aa)) are dehydratase (DH) domain. One can recognise a PKS/mFAS DH domain in the interval 931 to 1275 (HDLLGLRMTD…LRSLAALDGA (345 aa)). The Proton acceptor; for dehydratase activity role is filled by His-963. The segment at 1099-1275 (LQPGEDIPPS…LRSLAALDGA (177 aa)) is C-terminal hotdog fold. Asp-1177 functions as the Proton donor; for dehydratase activity in the catalytic mechanism. The tract at residues 1733–2045 (GTAHAATFVE…RHENMTKYVV (313 aa)) is enoylreductase (ER) domain. The segment at 2069–2252 (ATYVVAGGLG…YMALNIGLIE (184 aa)) is catalytic ketoreductase (KRc) domain. One can recognise a Carrier domain in the interval 2363–2440 (DIEAFAARAI…ALARKVTLRS (78 aa)). An O-(pantetheine 4'-phosphoryl)serine modification is found at Ser-2400. The interval 2445 to 2501 (GGAGGDASSTGNSESMARTPSDSSTVPTSIPATPSRSPSREPPAKETLTKSQQHLPI) is disordered. The span at 2456 to 2481 (NSESMARTPSDSSTVPTSIPATPSRS) shows a compositional bias: polar residues. Residues 2482–2492 (PSREPPAKETL) show a composition bias toward basic and acidic residues. The segment at 2864 to 3084 (HFYSQLNRAF…LGVVRRVVEG (221 aa)) is choline/carnitine acyltransferase domain.

The protein operates within antibiotic biosynthesis. Functionally, highly reducing polyketide synthase; part of the gene cluster that mediates the biosynthesis of sordarin and hypoxysordarin, glycoside antibiotics with a unique tetracyclic diterpene aglycone structure. First, the geranylgeranyl diphosphate synthase sdnC constructs GGDP from farnesyl diphosphate and isopentenyl diphosphate. The diterpene cyclase sdnA then catalyzes the cyclization of GGDP to afford cycloaraneosene. Cycloaraneosene is then hydroxylated four times by the putative cytochrome P450 monooxygenases sdnB, sdnE, sdnF and sdnH to give a hydroxylated cycloaraneosene derivative such as cycloaraneosene-8,9,13,19-tetraol. Although the order of the hydroxylations is unclear, at least C8, C9 and C13 of the cycloaraneosene skeleton are hydroxylated before the sordaricin formation. Dehydration of the 13-hydroxy group of the hydroxylated cycloaraneosene derivative might be catalyzed by an unassigned hypothetical protein such as sdnG and sdnP to construct the cyclopentadiene moiety. The FAD-dependent oxidoreductase sdnN is proposed to catalyze the oxidation at C9 of the hydroxylated cycloaraneosene derivative and also catalyze the Baeyer-Villiger oxidation to give the lactone intermediate. The presumed lactone intermediate would be hydrolyzed to give an acrolein moiety and a carboxylate moiety. Then, [4+2]cycloaddition would occur between the acrolein moiety and the cyclopentadiene moiety to give sordaricin. SdnN might also be involved in the [4+2]cycloaddition after the hypothesized oxidation to accommodate the oxidized product and prompt the [4+2]cycloaddition. GDP-6-deoxy-D-altrose may be biosynthesized from GDP-D-mannose by the putative GDP-mannose-4,6-dehydratase sdnI and the short-chain dehydrogenase sdnK. The glycosyltransferase sdnJ catalyzes the attachment of 6-deoxy-D-altrose onto the 19-hydroxy group of sordaricin to give 4'-O-demethylsordarin. The methyltransferase sdnD would complete the biosynthesis of sordarin. Sordarin can be further modified into hypoxysordarin. The unique acyl chain at the 3'-hydroxy group of hypoxysordarin would be constructed by an iterative type I PKS sdnO and the trans-acting polyketide methyltransferase sdnL. SdnL would be responsible for the introduction of an alpha-methyl group of the polyketide chain. Alternatively, the putative beta-lactamase-like sdnR might be responsible for the cleavage and transfer of the polyketide chain from the PKS sdnO to sordarin. Two putative cytochrome P450 monooxygenases, sdnQ and sdnT, might catalyze the epoxidations of the polyketide chain to complete the biosynthesis of hypoxysordarin. Transcriptional regulators sdnM and sdnS are presumably encoded for the transcriptional regulation of the expression of the sdn gene cluster. This is Highly reducing polyketide synthase sdnO from Sordaria araneosa (Pleurage araneosa).